Here is a 433-residue protein sequence, read N- to C-terminus: Enolase (433 aa).

(2R)-2-phosphoglycerate is bound at residue Gln163. Glu205 serves as the catalytic Proton donor. 3 residues coordinate Mg(2+): Asp242, Glu285, and Asp312. Lys337, Arg366, Ser367, and Lys388 together coordinate (2R)-2-phosphoglycerate. Lys337 acts as the Proton acceptor in catalysis.

This sequence belongs to the enolase family. Mg(2+) serves as cofactor.

Its subcellular location is the cytoplasm. The protein resides in the secreted. It is found in the cell surface. It catalyses the reaction (2R)-2-phosphoglycerate = phosphoenolpyruvate + H2O. Its pathway is carbohydrate degradation; glycolysis; pyruvate from D-glyceraldehyde 3-phosphate: step 4/5. In terms of biological role, catalyzes the reversible conversion of 2-phosphoglycerate (2-PG) into phosphoenolpyruvate (PEP). It is essential for the degradation of carbohydrates via glycolysis. The chain is Enolase from Lawsonia intracellularis (strain PHE/MN1-00).